We begin with the raw amino-acid sequence, 32 residues long: NYLHDTVGRLWGPSRAGLLDGLDWMVGDVQSR.

The N-terminus is blocked.

Its activity is regulated as follows. Inhibited by phenylmethanesulfonyl fluoride (PMSF). Not inhibited by EDTA, EGTA, beta-mercaptoethanol, indoacetamide, benzamidine, aprotinin, pepstatin A and trypsin inhibitor. Plasmin-like serine protease. Has fibrinolytic and fibrinogenolytic but not plasminogenolytic activity. Cleaves after Arg and Lys residues. This chain is Fibrinolytic enzyme, found in Hediste japonica (Polychaete worm).